Here is a 266-residue protein sequence, read N- to C-terminus: NAD kinase 1 (266 aa).

Residue aspartate 45 is the Proton acceptor of the active site. Residues 45-46 (DG), 122-123 (NE), and arginine 148 each bind NAD(+). Position 150 (aspartate 150) interacts with ATP. NAD(+) contacts are provided by residues serine 158 and 161–166 (TAYNKA).

It belongs to the NAD kinase family. In terms of assembly, homodimer. Requires Ca(2+) as cofactor. It depends on Mn(2+) as a cofactor.

The protein resides in the cytoplasm. The enzyme catalyses NAD(+) + ATP = ADP + NADP(+) + H(+). Allosterically inhibited by NADP and activated by quinolinic acid. Strongly inhibited by HgCl(2). Functionally, involved in the regulation of the intracellular balance of NAD and NADP, and is a key enzyme in the biosynthesis of NADP. Catalyzes specifically the phosphorylation on 2'-hydroxyl of the adenosine moiety of NAD to yield NADP. It can use ATP and other nucleoside triphosphates (GTP, UTP) as well as inorganic polyphosphate (poly(P)) as a source of phosphorus. The protein is NAD kinase 1 (ppnKA) of Bacillus subtilis (strain 168).